Consider the following 266-residue polypeptide: MLKVISSLLVYMTASVMAVASPLAHSGEPSGEYPTVNEIPVGEVRLYQIADGVWSHIATQSFDGAVYPSNGLIVRDGDELLLIDTAWGAKNTAALLAEIEKQIGLPVTRAVSTHFHDDRVGGVDVLRAAGVATYASPSTRRLAEAEGNEIPTHSLEGLSSSGDAVRFGPVELFYPGAAHSTDNLVVYVPSANVLYGGCAVHELSSTSAGNVADADLAEWPTSVERIQKHYPEAEVVIPGHGLPGGLDLLQHTANVVKAHKNRSVAE.

The signal sequence occupies residues 1–20 (MLKVISSLLVYMTASVMAVA). Positions 114, 116, 118, 179, 198, and 240 each coordinate Zn(2+).

This sequence belongs to the metallo-beta-lactamase superfamily. Class-B beta-lactamase family. As to quaternary structure, monomer. The cofactor is Zn(2+).

Its subcellular location is the periplasm. The catalysed reaction is a beta-lactam + H2O = a substituted beta-amino acid. Weakly inhibited by beta-lactamase-blocking agent sulbactam. In terms of biological role, class B beta-lactamase which confers resistance to the beta-lactam antibiotics, including penicillins, cephalosporins and carbapenems. Acts via hydrolysis of the beta-lactam ring. Has penicillin-, cephalosporin- and carbapenem-hydrolyzing activities. The chain is Metallo-beta-lactamase VIM-1 from Pseudomonas aeruginosa (strain ATCC 15692 / DSM 22644 / CIP 104116 / JCM 14847 / LMG 12228 / 1C / PRS 101 / PAO1).